Here is a 64-residue protein sequence, read N- to C-terminus: Small ribosomal subunit protein eS17 (64 aa).

The protein belongs to the eukaryotic ribosomal protein eS17 family.

This chain is Small ribosomal subunit protein eS17, found in Methanospirillum hungatei JF-1 (strain ATCC 27890 / DSM 864 / NBRC 100397 / JF-1).